The following is a 121-amino-acid chain: MAQRVTFRRRNPYNTRSNKIKVVKTPGGILRAQHVKKLATRPKCGDCGSALQGISTLRPRQYATVSKTHKTVSRAYGGSRCANCVKERIVRAFLIEEQKIVKKVVKEQTEAAKKSEKKSKK.

It belongs to the eukaryotic ribosomal protein eL34 family. As to quaternary structure, component of the large ribosomal subunit (LSU). Mature yeast ribosomes consist of a small (40S) and a large (60S) subunit. The 40S small subunit contains 1 molecule of ribosomal RNA (18S rRNA) and 33 different proteins (encoded by 57 genes). The large 60S subunit contains 3 rRNA molecules (25S, 5.8S and 5S rRNA) and 46 different proteins (encoded by 81 genes).

It is found in the cytoplasm. Component of the ribosome, a large ribonucleoprotein complex responsible for the synthesis of proteins in the cell. The small ribosomal subunit (SSU) binds messenger RNAs (mRNAs) and translates the encoded message by selecting cognate aminoacyl-transfer RNA (tRNA) molecules. The large subunit (LSU) contains the ribosomal catalytic site termed the peptidyl transferase center (PTC), which catalyzes the formation of peptide bonds, thereby polymerizing the amino acids delivered by tRNAs into a polypeptide chain. The nascent polypeptides leave the ribosome through a tunnel in the LSU and interact with protein factors that function in enzymatic processing, targeting, and the membrane insertion of nascent chains at the exit of the ribosomal tunnel. The sequence is that of Large ribosomal subunit protein eL34B from Saccharomyces cerevisiae (strain ATCC 204508 / S288c) (Baker's yeast).